A 102-amino-acid polypeptide reads, in one-letter code: ATP-dependent Clp protease adapter protein ClpS (102 aa).

Belongs to the ClpS family. Binds to the N-terminal domain of the chaperone ClpA.

In terms of biological role, involved in the modulation of the specificity of the ClpAP-mediated ATP-dependent protein degradation. This Nitrosospira multiformis (strain ATCC 25196 / NCIMB 11849 / C 71) protein is ATP-dependent Clp protease adapter protein ClpS.